A 392-amino-acid polypeptide reads, in one-letter code: Tryptophan synthase beta chain (392 aa).

K86 carries the N6-(pyridoxal phosphate)lysine modification.

This sequence belongs to the TrpB family. As to quaternary structure, tetramer of two alpha and two beta chains. It depends on pyridoxal 5'-phosphate as a cofactor.

The catalysed reaction is (1S,2R)-1-C-(indol-3-yl)glycerol 3-phosphate + L-serine = D-glyceraldehyde 3-phosphate + L-tryptophan + H2O. The protein operates within amino-acid biosynthesis; L-tryptophan biosynthesis; L-tryptophan from chorismate: step 5/5. Functionally, the beta subunit is responsible for the synthesis of L-tryptophan from indole and L-serine. In Buchnera aphidicola subsp. Melaphis rhois, this protein is Tryptophan synthase beta chain (trpB).